The sequence spans 339 residues: Dihydroorotase (339 aa).

The Zn(2+) site is built by histidine 12 and histidine 14. Substrate is bound by residues 14 to 16 and asparagine 40; that span reads HVR. 4 residues coordinate Zn(2+): lysine 94, histidine 133, histidine 167, and aspartate 239. N6-carboxylysine is present on lysine 94. Position 133 (histidine 133) interacts with substrate. Aspartate 239 is a catalytic residue. Substrate contacts are provided by histidine 243 and alanine 255.

The protein belongs to the metallo-dependent hydrolases superfamily. DHOase family. Class II DHOase subfamily. Homodimer. Zn(2+) is required as a cofactor.

It carries out the reaction (S)-dihydroorotate + H2O = N-carbamoyl-L-aspartate + H(+). Its pathway is pyrimidine metabolism; UMP biosynthesis via de novo pathway; (S)-dihydroorotate from bicarbonate: step 3/3. Functionally, catalyzes the reversible cyclization of carbamoyl aspartate to dihydroorotate. The polypeptide is Dihydroorotase (Helicobacter pylori (strain HPAG1)).